The following is a 1224-amino-acid chain: DNA-directed RNA polymerase subunit beta' (1224 aa).

Cys-60, Cys-62, Cys-75, and Cys-78 together coordinate Zn(2+). Mg(2+) is bound by residues Asp-449, Asp-451, and Asp-453. Zn(2+)-binding residues include Cys-819, Cys-893, Cys-900, and Cys-903.

The protein belongs to the RNA polymerase beta' chain family. The RNAP catalytic core consists of 2 alpha, 1 beta, 1 beta' and 1 omega subunit. When a sigma factor is associated with the core the holoenzyme is formed, which can initiate transcription. It depends on Mg(2+) as a cofactor. Zn(2+) serves as cofactor.

It carries out the reaction RNA(n) + a ribonucleoside 5'-triphosphate = RNA(n+1) + diphosphate. DNA-dependent RNA polymerase catalyzes the transcription of DNA into RNA using the four ribonucleoside triphosphates as substrates. In Lactobacillus johnsonii (strain CNCM I-12250 / La1 / NCC 533), this protein is DNA-directed RNA polymerase subunit beta'.